The chain runs to 271 residues: Glutamate racemase (271 aa).

Substrate is bound by residues 10–11 (DS) and 42–43 (YG). C73 functions as the Proton donor/acceptor in the catalytic mechanism. 74 to 75 (NT) serves as a coordination point for substrate. The active-site Proton donor/acceptor is C183. Substrate is bound at residue 184-185 (TH).

This sequence belongs to the aspartate/glutamate racemases family.

It catalyses the reaction L-glutamate = D-glutamate. It participates in cell wall biogenesis; peptidoglycan biosynthesis. In terms of biological role, provides the (R)-glutamate required for cell wall biosynthesis. The polypeptide is Glutamate racemase (Lactococcus lactis subsp. lactis (strain IL1403) (Streptococcus lactis)).